Reading from the N-terminus, the 558-residue chain is Urocanate hydratase (558 aa).

Residues 50 to 51 (GG), Gln128, 174 to 176 (GMG), Glu194, Arg199, 240 to 241 (NA), 261 to 265 (QTSAH), 271 to 272 (YI), and Tyr320 contribute to the NAD(+) site. Cys408 is a catalytic residue. Position 490 (Gly490) interacts with NAD(+).

It belongs to the urocanase family. Requires NAD(+) as cofactor.

It is found in the cytoplasm. It catalyses the reaction 4-imidazolone-5-propanoate = trans-urocanate + H2O. It functions in the pathway amino-acid degradation; L-histidine degradation into L-glutamate; N-formimidoyl-L-glutamate from L-histidine: step 2/3. Its function is as follows. Catalyzes the conversion of urocanate to 4-imidazolone-5-propionate. This chain is Urocanate hydratase, found in Deinococcus radiodurans (strain ATCC 13939 / DSM 20539 / JCM 16871 / CCUG 27074 / LMG 4051 / NBRC 15346 / NCIMB 9279 / VKM B-1422 / R1).